The chain runs to 326 residues: Pectate lyase plyB (326 aa).

Positions 1–15 (MRFTPLFLLAAVAIA) are cleaved as a signal peptide. Asp-133, Asp-162, and Asp-166 together coordinate Ca(2+). Residue Arg-219 is part of the active site.

Belongs to the polysaccharide lyase 1 family. Ca(2+) serves as cofactor.

The protein localises to the secreted. The catalysed reaction is Eliminative cleavage of (1-&gt;4)-alpha-D-galacturonan to give oligosaccharides with 4-deoxy-alpha-D-galact-4-enuronosyl groups at their non-reducing ends.. Its pathway is glycan metabolism; pectin degradation; 2-dehydro-3-deoxy-D-gluconate from pectin: step 2/5. Pectinolytic enzyme consist of four classes of enzymes: pectin lyase, polygalacturonase, pectin methylesterase and rhamnogalacturonase. Among pectinolytic enzymes, pectin lyase is the most important in depolymerization of pectin, since it cleaves internal glycosidic bonds of highly methylated pectins. The sequence is that of Pectate lyase plyB (plyB) from Emericella nidulans (strain FGSC A4 / ATCC 38163 / CBS 112.46 / NRRL 194 / M139) (Aspergillus nidulans).